We begin with the raw amino-acid sequence, 418 residues long: Serine--tRNA ligase (418 aa).

Position 231-233 (231-233 (TAE)) interacts with L-serine. 262-264 (RRE) provides a ligand contact to ATP. Glutamate 285 provides a ligand contact to L-serine. 349–352 (EISS) contacts ATP. An L-serine-binding site is contributed by serine 384.

This sequence belongs to the class-II aminoacyl-tRNA synthetase family. Type-1 seryl-tRNA synthetase subfamily. In terms of assembly, homodimer. The tRNA molecule binds across the dimer.

The protein resides in the cytoplasm. It catalyses the reaction tRNA(Ser) + L-serine + ATP = L-seryl-tRNA(Ser) + AMP + diphosphate + H(+). The enzyme catalyses tRNA(Sec) + L-serine + ATP = L-seryl-tRNA(Sec) + AMP + diphosphate + H(+). The protein operates within aminoacyl-tRNA biosynthesis; selenocysteinyl-tRNA(Sec) biosynthesis; L-seryl-tRNA(Sec) from L-serine and tRNA(Sec): step 1/1. Functionally, catalyzes the attachment of serine to tRNA(Ser). Is also able to aminoacylate tRNA(Sec) with serine, to form the misacylated tRNA L-seryl-tRNA(Sec), which will be further converted into selenocysteinyl-tRNA(Sec). This is Serine--tRNA ligase from Coprothermobacter proteolyticus (strain ATCC 35245 / DSM 5265 / OCM 4 / BT).